The chain runs to 136 residues: Protein PsiE (136 aa).

A run of 4 helical transmembrane segments spans residues 15-35, 55-75, 82-102, and 108-128; these read ILQT…VVFL, YELV…ALIV, FHFP…RLII, and PLDV…LWLC.

The protein belongs to the PsiE family.

The protein resides in the cell inner membrane. The protein is Protein PsiE of Escherichia coli (strain SE11).